Reading from the N-terminus, the 407-residue chain is Peptidase T (407 aa).

Residue H81 coordinates Zn(2+). D83 is an active-site residue. D142 provides a ligand contact to Zn(2+). The active-site Proton acceptor is E176. Zn(2+) is bound by residues E177, D199, and H381.

This sequence belongs to the peptidase M20B family. Zn(2+) serves as cofactor.

The protein resides in the cytoplasm. The enzyme catalyses Release of the N-terminal residue from a tripeptide.. Functionally, cleaves the N-terminal amino acid of tripeptides. The sequence is that of Peptidase T from Streptococcus pneumoniae (strain JJA).